The sequence spans 111 residues: UPF0342 protein SAG1376 (111 aa).

Residues 52-63 (QEMMQSGQMPSQ) show a composition bias toward polar residues. The segment at 52–71 (QEMMQSGQMPSQEEQDEMSK) is disordered.

It belongs to the UPF0342 family.

In Streptococcus agalactiae serotype V (strain ATCC BAA-611 / 2603 V/R), this protein is UPF0342 protein SAG1376.